Reading from the N-terminus, the 78-residue chain is Large ribosomal subunit protein bL28 (78 aa).

Residues 1-27 are disordered; the sequence is MSAYCQVTGRKPSFGKSVSHSHRRTNR.

The protein belongs to the bacterial ribosomal protein bL28 family.

The polypeptide is Large ribosomal subunit protein bL28 (Corynebacterium kroppenstedtii (strain DSM 44385 / JCM 11950 / CIP 105744 / CCUG 35717)).